Reading from the N-terminus, the 67-residue chain is Putative ATP synthase subunit epsilon, mitochondrial (67 aa).

It belongs to the eukaryotic ATPase epsilon family. F-type ATPases have 2 components, CF(1) - the catalytic core - and CF(0) - the membrane proton channel. CF(1) has five subunits: alpha(3), beta(3), gamma(1), delta(1), epsilon(1). CF(0) seems to have nine subunits: a, b, c, d, e, f, g, F6 and 8 (or A6L).

Its subcellular location is the mitochondrion. It is found in the mitochondrion inner membrane. Mitochondrial membrane ATP synthase (F(1)F(0) ATP synthase or Complex V) produces ATP from ADP in the presence of a proton gradient across the membrane which is generated by electron transport complexes of the respiratory chain. F-type ATPases consist of two structural domains, F(1) - containing the extramembraneous catalytic core, and F(0) - containing the membrane proton channel, linked together by a central stalk and a peripheral stalk. During catalysis, ATP synthesis in the catalytic domain of F(1) is coupled via a rotary mechanism of the central stalk subunits to proton translocation. Part of the complex F(1) domain and of the central stalk which is part of the complex rotary element. Rotation of the central stalk against the surrounding alpha(3)beta(3) subunits leads to hydrolysis of ATP in three separate catalytic sites on the beta subunits. In Schizosaccharomyces pombe (strain 972 / ATCC 24843) (Fission yeast), this protein is Putative ATP synthase subunit epsilon, mitochondrial (atp15).